The following is a 331-amino-acid chain: T-cell acute lymphocytic leukemia protein 1 (331 aa).

Residues 1–22 are compositionally biased toward basic and acidic residues; sequence MTERPPSEAARSDPQLEGRDAA. Disordered regions lie at residues 1-27 and 40-86; these read MTERPPSEAARSDPQLEGRDAAEASMA and ETSR…EARH. At S12 the chain carries Phosphoserine. Gly residues predominate over residues 56–70; that stretch reads ARGGPGGGPAGGGGA. Basic and acidic residues predominate over residues 72-86; that stretch reads RDLKGRDAATAEARH. S122 and S172 each carry phosphoserine. Residues 187–239 form the bHLH domain; that stretch reads VRRIFTNSRERWRQQNVNGAFAELRKLIPTHPPDKKLSKNEILRLAMKYINFL. The interval 249 to 331 is disordered; sequence EGTQRAKTGK…LPAADGAGPR (83 aa). A compositionally biased stretch (gly residues) spans 263–275; sequence GAGGGGGGGGGGA.

As to quaternary structure, efficient DNA binding requires dimerization with another bHLH protein. Forms heterodimers with TCF3. Binds to the LIM domain containing protein LMO2 and to DRG1. Can assemble in a complex with LDB1 and LMO2. Component of a TAL-1 complex composed at least of CBFA2T3, LDB1, TAL1 and TCF3. Interacts with SBNO2; this interaction inhibits TAL1 occupancy of the DCSTAMP promoter, leading to the activation of the DCSTAMP promoter by the transcription factor MITF. In terms of processing, phosphorylated on serine residues. Phosphorylation of Ser-122 is strongly stimulated by hypoxia. Post-translationally, ubiquitinated; subsequent to hypoxia-dependent phosphorylation of Ser-122, ubiquitination targets the protein for rapid degradation via the ubiquitin system. This process may be characteristic for microvascular endothelial cells, since it could not be observed in large vessel endothelial cells. As to expression, leukemic stem cell.

Its subcellular location is the nucleus. Its function is as follows. Implicated in the genesis of hemopoietic malignancies. It may play an important role in hemopoietic differentiation. Serves as a positive regulator of erythroid differentiation. In Homo sapiens (Human), this protein is T-cell acute lymphocytic leukemia protein 1 (TAL1).